Consider the following 151-residue polypeptide: RNA polymerase-binding transcription factor DksA (151 aa).

The stretch at 34–54 (EAQLSHFKRILEAWRNQLRDE) forms a coiled coil. 4 residues coordinate Zn(2+): C114, C117, C135, and C138. Residues 114-138 (CESCGVEIGIRRLEARPTADLCIDC) form a dksA C4-type zinc finger.

Belongs to the DksA family. In terms of assembly, interacts directly with the RNA polymerase.

It localises to the cytoplasm. In terms of biological role, transcription factor that acts by binding directly to the RNA polymerase (RNAP). Required for negative regulation of rRNA expression and positive regulation of several amino acid biosynthesis promoters. Also required for regulation of fis expression. The chain is RNA polymerase-binding transcription factor DksA from Salmonella typhi.